A 239-amino-acid chain; its full sequence is Lactate utilization protein A (239 aa).

It belongs to the LutA/YkgE family.

Is involved in L-lactate degradation and allows cells to grow with lactate as the sole carbon source. The polypeptide is Lactate utilization protein A (Geobacillus thermodenitrificans (strain NG80-2)).